The primary structure comprises 795 residues: Phenylalanine--tRNA ligase beta subunit (795 aa).

A tRNA-binding domain is found at 39–148 (AGQFHGVVVG…IDAPLGVDLR (110 aa)). Residues 401 to 476 (PQSATITLRR…RIYGYNNIPD (76 aa)) form the B5 domain. 4 residues coordinate Mg(2+): Asp454, Asp460, Glu463, and Glu464. The FDX-ACB domain maps to 701 to 794 (SRFPSNRRDI…LKQRFQASLR (94 aa)).

The protein belongs to the phenylalanyl-tRNA synthetase beta subunit family. Type 1 subfamily. Tetramer of two alpha and two beta subunits. The cofactor is Mg(2+).

The protein resides in the cytoplasm. It carries out the reaction tRNA(Phe) + L-phenylalanine + ATP = L-phenylalanyl-tRNA(Phe) + AMP + diphosphate + H(+). In Photorhabdus laumondii subsp. laumondii (strain DSM 15139 / CIP 105565 / TT01) (Photorhabdus luminescens subsp. laumondii), this protein is Phenylalanine--tRNA ligase beta subunit.